A 413-amino-acid chain; its full sequence is Enolase (413 aa).

Gln170 provides a ligand contact to (2R)-2-phosphoglycerate. Glu212 functions as the Proton donor in the catalytic mechanism. Residues Asp245, Glu286, and Asp313 each coordinate Mg(2+). 4 residues coordinate (2R)-2-phosphoglycerate: Lys338, Arg367, Ser368, and Lys389. Catalysis depends on Lys338, which acts as the Proton acceptor.

The protein belongs to the enolase family. Mg(2+) is required as a cofactor.

It is found in the cytoplasm. The protein localises to the secreted. It localises to the cell surface. The enzyme catalyses (2R)-2-phosphoglycerate = phosphoenolpyruvate + H2O. Its pathway is carbohydrate degradation; glycolysis; pyruvate from D-glyceraldehyde 3-phosphate: step 4/5. Catalyzes the reversible conversion of 2-phosphoglycerate (2-PG) into phosphoenolpyruvate (PEP). It is essential for the degradation of carbohydrates via glycolysis. The polypeptide is Enolase (Neorickettsia sennetsu (strain ATCC VR-367 / Miyayama) (Ehrlichia sennetsu)).